The primary structure comprises 118 residues: Large ribosomal subunit protein uL18 (118 aa).

Belongs to the universal ribosomal protein uL18 family. As to quaternary structure, part of the 50S ribosomal subunit; part of the 5S rRNA/L5/L18/L25 subcomplex. Contacts the 5S and 23S rRNAs.

This is one of the proteins that bind and probably mediate the attachment of the 5S RNA into the large ribosomal subunit, where it forms part of the central protuberance. The chain is Large ribosomal subunit protein uL18 from Rickettsia prowazekii (strain Madrid E).